We begin with the raw amino-acid sequence, 62 residues long: MGMRMMFTVFLLVVLAITVVSFPLDRESDGANAEARTHDHEKHALDRNGCCRNPACESHRCG.

The N-terminal stretch at Met1–Ser21 is a signal peptide. The propeptide occupies Phe22–Asn48. 2 disulfides stabilise this stretch: Cys50-Cys56 and Cys51-Cys61. Cys61 carries the cysteine amide modification.

This sequence belongs to the conotoxin A superfamily. As to expression, expressed by the venom duct.

Its subcellular location is the secreted. Alpha-conotoxins act on postsynaptic membranes, they bind to the nicotinic acetylcholine receptors (nAChR) and thus inhibit them. In Conus striatus (Striated cone), this protein is Alpha-conotoxin-like S1.1.